The following is a 695-amino-acid chain: Nicastrin (695 aa).

An N-terminal signal peptide occupies residues 1–22; sequence MEMRLNAASIWLLILSYGATIA. Topologically, residues 23 to 654 are extracellular; that stretch reads QGERTRDKMY…IFLRPSNVHQ (632 aa). Residues Asn45, Asn108, Asn116, Asn138, Asn381, Asn461, Asn489, Asn585, and Asn609 are each glycosylated (N-linked (GlcNAc...) asparagine). Residues 655 to 675 traverse the membrane as a helical segment; the sequence is VTTLSVGIVVLIISFCLVYII. The Cytoplasmic segment spans residues 676 to 695; that stretch reads SSRSEVLFEDLPASNAALFG.

Belongs to the nicastrin family. As to quaternary structure, component of the gamma-secretase complex, a complex composed of a presenilin (Psn) homodimer, nicastrin (Nct), Aph-1 and Pen-2.

The protein localises to the membrane. Its function is as follows. Essential subunit of the gamma-secretase complex, an endoprotease complex that catalyzes the intramembrane cleavage of integral membrane proteins such as Notch. It probably represents a stabilizing cofactor required for the assembly of the gamma-secretase complex. This is Nicastrin from Drosophila melanogaster (Fruit fly).